The following is a 232-amino-acid chain: uncharacterized protein (232 aa).

A helical membrane pass occupies residues 209–229 (ATISTPALGYAYFLFTLTLVF).

It is found in the host membrane. This is an uncharacterized protein from Saccharolobus islandicus (Sulfolobus islandicus).